The chain runs to 247 residues: Caffeoyl-CoA O-methyltransferase (247 aa).

Substrate is bound at residue lysine 21. S-adenosyl-L-methionine-binding positions include threonine 63, glutamate 85, 87–88, serine 93, aspartate 111, and alanine 140; that span reads GV. Aspartate 163 is a binding site for substrate. A divalent metal cation is bound at residue aspartate 163. Residue aspartate 165 participates in S-adenosyl-L-methionine binding. A divalent metal cation is bound by residues aspartate 189 and asparagine 190. Substrate is bound at residue asparagine 194.

Belongs to the class I-like SAM-binding methyltransferase superfamily. Cation-dependent O-methyltransferase family. CCoAMT subfamily. A divalent metal cation serves as cofactor.

The enzyme catalyses (E)-caffeoyl-CoA + S-adenosyl-L-methionine = (E)-feruloyl-CoA + S-adenosyl-L-homocysteine + H(+). The protein operates within aromatic compound metabolism; phenylpropanoid biosynthesis. In terms of biological role, methylates caffeoyl-CoA to feruloyl-CoA and 5-hydroxyferuloyl-CoA to sinapoyl-CoA. Plays a role in the synthesis of feruloylated polysaccharides. Involved in the reinforcement of the plant cell wall. Also involved in the responding to wounding or pathogen challenge by the increased formation of cell wall-bound ferulic acid polymers. The chain is Caffeoyl-CoA O-methyltransferase from Populus tremuloides (Quaking aspen).